Here is a 454-residue protein sequence, read N- to C-terminus: MINIFEVNETNKMIEQEMLDVRTITLGISLLDCCDTDLDKLNTRIYEKITRVAKNLVAVGKEIEREYGIPIVNKRISVTPIALVGGQACSSPEDFVTIAKTLDRAAKEVGVNFLGGYSALVSKGMTKAERDLILSIPQALACTERICSSVNIGSTRTGINMDAVKLMGEIVLSTAEATKDQNSLGCAKLVVFCNAPDDNPFMAGAFHGVTEGDAVINVGVSGPGVVKHALEAVRGKNFEVLCETVKKTAFKVTRMGQLVALEASERLGIPFGIVDLSLAPTPSVGDSVAEILEEMGLESVGAPGTTAALALLNDQVKKGGVMASSFVGGLSGAFIPVSEDQGMIDAVNRGALTLEKLEAMTSVCSVGLDMIAIPGNTPATTIAGIIADEAAIGMINQKTTAVRLIPVIGKDIGDTVEFGGLLGYAPVQPVNKFSCANFINRGGRIPAPIHSFKN.

This sequence belongs to the UPF0210 family.

The chain is UPF0210 protein Mlab_1030 from Methanocorpusculum labreanum (strain ATCC 43576 / DSM 4855 / Z).